The following is a 159-amino-acid chain: Transcriptional repressor NrdR (159 aa).

A zinc finger lies at 3-34 (CPKCGYNKSSVVDSRQAEEGTTIRRRRECEKC). The region spanning 49-139 (LLVIKKDGTR…VYKSFKDVDE (91 aa)) is the ATP-cone domain.

It belongs to the NrdR family. The cofactor is Zn(2+).

In terms of biological role, negatively regulates transcription of bacterial ribonucleotide reductase nrd genes and operons by binding to NrdR-boxes. The chain is Transcriptional repressor NrdR from Streptococcus agalactiae serotype Ia (strain ATCC 27591 / A909 / CDC SS700).